A 470-amino-acid polypeptide reads, in one-letter code: Heparan-sulfate 6-O-sulfotransferase 3 (470 aa).

At 1–4 the chain is on the cytoplasmic side; the sequence is MDER. Residues 5–27 traverse the membrane as a helical; Signal-anchor for type II membrane protein segment; it reads FNKWLLTPVLTLLFVVIMYQYVS. Residues 28-470 lie on the Lumenal side of the membrane; sequence PSCTSSCTNF…EDYNSQVVRW (443 aa). The disordered stretch occupies residues 36–121; that stretch reads NFGEQLRSGE…EAPENGSLPR (86 aa). The segment covering 88–113 has biased composition (acidic residues); it reads PEDEDEDPGDPEEEEEEEEEEPDPEA. N-linked (GlcNAc...) asparagine glycosylation is found at Asn-116 and Asn-127. A 3'-phosphoadenylyl sulfate-binding site is contributed by 151 to 159; the sequence is HIQKTGGTT. Substrate is bound by residues 181-182, Arg-198, Trp-203, and His-208; that span reads KK. His-208 acts as the Proton acceptor in catalysis. An N-linked (GlcNAc...) asparagine glycan is attached at Asn-230. Residues Arg-244 and Ser-252 each contribute to the 3'-phosphoadenylyl sulfate site. The substrate site is built by His-256 and Trp-263. Asn-323 and Asn-328 each carry an N-linked (GlcNAc...) asparagine glycan. 376–378 serves as a coordination point for 3'-phosphoadenylyl sulfate; the sequence is TQF. An N-linked (GlcNAc...) asparagine glycan is attached at Asn-379. Residue 382–383 coordinates 3'-phosphoadenylyl sulfate; it reads RA. Residues 421-453 are disordered; sequence TKQLEHQRDRQKRREERRLQREHRAHRWPKEDR. The span at 422–439 shows a compositional bias: basic and acidic residues; it reads KQLEHQRDRQKRREERRL.

Belongs to the sulfotransferase 6 family. In terms of tissue distribution, ubiquitously expressed.

It localises to the membrane. It catalyses the reaction alpha-D-glucosaminyl-[heparan sulfate](n) + 3'-phosphoadenylyl sulfate = 6-sulfo-alpha-D-glucosaminyl-[heparan sulfate](n) + adenosine 3',5'-bisphosphate + H(+). Functionally, 6-O-sulfation enzyme which catalyzes the transfer of sulfate from 3'-phosphoadenosine 5'-phosphosulfate (PAPS) to position 6 of the N-sulfoglucosamine residue (GlcNS) of heparan sulfate. This chain is Heparan-sulfate 6-O-sulfotransferase 3 (Hs6st3), found in Mus musculus (Mouse).